The sequence spans 164 residues: Thioredoxin domain-containing protein R443 (164 aa).

Residues 8–28 (HIVLIVLAIILILWIISLLLC) form a helical membrane-spanning segment. The 128-residue stretch at 36-163 (YQVPIIQPMQ…LTQFIRSNMN (128 aa)) folds into the Thioredoxin domain. Cysteine 84 and cysteine 87 are oxidised to a cystine.

The protein belongs to the thioredoxin family.

It localises to the host membrane. Its subcellular location is the virion. This chain is Thioredoxin domain-containing protein R443, found in Acanthamoeba polyphaga mimivirus (APMV).